We begin with the raw amino-acid sequence, 1142 residues long: Enamelin (1142 aa).

An N-terminal signal peptide occupies residues 1 to 38 (MLLSCRHGASSPKLDNLVPSGKMKILLVFLGLLCYSAA). Position 53 is a phosphoserine (S53). Disordered stretches follow at residues 90 to 347 (YQMP…FYRN), 374 to 513 (YRRV…IIPK), 543 to 587 (TEGI…LSHG), and 603 to 662 (RENS…FPGQ). The span at 128–148 (QPQPKTPTPKQPLNEPSPTPT) shows a compositional bias: pro residues. Residues S191 and S216 each carry the phosphoserine modification. Basic and acidic residues predominate over residues 223–234 (DFEKPKEKDPPK). Composition is skewed to polar residues over residues 243–303 (SVNT…SQSP) and 381–395 (TARS…NSAN). N-linked (GlcNAc...) asparagine glycans are attached at residues N245, N252, N264, and N291. A propeptide spanning residues 277–514 (NPRSNPTGQN…QTQTQIIPKG (238 aa)) is cleaved from the precursor. Residues 431-442 (PREKQVSQKERT) are compositionally biased toward basic and acidic residues. Residues 453–467 (WRNSQDYGINKSNYK) show a composition bias toward polar residues. N462 carries N-linked (GlcNAc...) asparagine glycosylation. Hydroxyproline is present on P547. Basic and acidic residues predominate over residues 570 to 582 (FKEDPGRQEEHLP). Residues 666–669 (DMEE) constitute a propeptide that is removed on maturation. Polar residues predominate over residues 787–816 (NLYKTPTSSPHQKENQPYSNNSPAGLQKNP). Disordered stretches follow at residues 787-820 (NLYK…TWHE), 921-965 (TSIV…SQLS), and 1020-1049 (VFGT…QQRQ). The N-linked (GlcNAc...) asparagine glycan is linked to N929. The segment covering 952-965 (LRRSTPCSVKSQLS) has biased composition (polar residues). An N-linked (GlcNAc...) asparagine glycan is attached at N1040.

In terms of processing, proteolytically cleaved into several smaller polypeptides. Cleavage of N-terminal region of enamelin occurs soon after secretion. Post-translationally, phosphorylated by FAM20C in vitro. Expressed by secretory-phase ameloblasts. Intact enamelin and large-molecular-weight enamelins are limited to the most superficial layer of the developing enamel matrix, while low-molecular-weight enamelins are observed in deeper enamelin. Preferential localization among the crystallites in rod and interrod enamel.

It is found in the secreted. The protein localises to the extracellular space. It localises to the extracellular matrix. Its function is as follows. Involved in the mineralization and structural organization of enamel. Involved in the extension of enamel during the secretory stage of dental enamel formation. In Sus scrofa (Pig), this protein is Enamelin (ENAM).